A 636-amino-acid chain; its full sequence is Biosynthetic arginine decarboxylase (636 aa).

An N6-(pyridoxal phosphate)lysine modification is found at lysine 101. Position 286–296 (phenylalanine 286–tyrosine 296) interacts with substrate.

Belongs to the Orn/Lys/Arg decarboxylase class-II family. SpeA subfamily. Mg(2+) is required as a cofactor. It depends on pyridoxal 5'-phosphate as a cofactor.

It carries out the reaction L-arginine + H(+) = agmatine + CO2. The protein operates within amine and polyamine biosynthesis; agmatine biosynthesis; agmatine from L-arginine: step 1/1. In terms of biological role, catalyzes the biosynthesis of agmatine from arginine. This Shewanella frigidimarina (strain NCIMB 400) protein is Biosynthetic arginine decarboxylase.